Consider the following 750-residue polypeptide: Photosystem I P700 chlorophyll a apoprotein A1 (750 aa).

8 helical membrane-spanning segments follow: residues 70-93 (VFSAHFGQLAIIFVWLSGMYFHGA), 156-179 (LYCTAIGALIFATLMLFAGWFHYH), 195-219 (LNHHLAGLLGLGSLAWAGHQVHVSL), 291-309 (TVHHHLAIAVLFLVAGHMY), 346-369 (WHAQLALNLAMLGSLTIIVAHHMY), 385-411 (LSLFTHHMWIGGFLVVGAAAHAAIFMV), 433-455 (AIISHLNWVCIFLGFHSFGLYIH), and 531-549 (FLVHHIHAFTIHVTVLILL). The [4Fe-4S] cluster site is built by cysteine 573 and cysteine 582. The next 2 helical transmembrane spans lie at 589 to 610 (HVFLGLFWMYNSISIVIFHFSW) and 664 to 686 (LSAYGLLFLGAHFVWAFSLMFLF). Histidine 675 contributes to the chlorophyll a' binding site. The chlorophyll a site is built by methionine 683 and tyrosine 691. Tryptophan 692 is a phylloquinone binding site. The helical transmembrane segment at 724 to 744 (AVGVAHYLLGGIATTWAFFLA) threads the bilayer.

This sequence belongs to the PsaA/PsaB family. In terms of assembly, the PsaA/B heterodimer binds the P700 chlorophyll special pair and subsequent electron acceptors. PSI consists of a core antenna complex that captures photons, and an electron transfer chain that converts photonic excitation into a charge separation. The eukaryotic PSI reaction center is composed of at least 11 subunits. The cofactor is P700 is a chlorophyll a/chlorophyll a' dimer, A0 is one or more chlorophyll a, A1 is one or both phylloquinones and FX is a shared 4Fe-4S iron-sulfur center..

The protein resides in the plastid. The protein localises to the chloroplast thylakoid membrane. The catalysed reaction is reduced [plastocyanin] + hnu + oxidized [2Fe-2S]-[ferredoxin] = oxidized [plastocyanin] + reduced [2Fe-2S]-[ferredoxin]. Functionally, psaA and PsaB bind P700, the primary electron donor of photosystem I (PSI), as well as the electron acceptors A0, A1 and FX. PSI is a plastocyanin-ferredoxin oxidoreductase, converting photonic excitation into a charge separation, which transfers an electron from the donor P700 chlorophyll pair to the spectroscopically characterized acceptors A0, A1, FX, FA and FB in turn. Oxidized P700 is reduced on the lumenal side of the thylakoid membrane by plastocyanin. This chain is Photosystem I P700 chlorophyll a apoprotein A1, found in Psilotum nudum (Whisk fern).